The chain runs to 218 residues: Pyridoxine/pyridoxamine 5'-phosphate oxidase (218 aa).

Residues Arg14 to Tyr17 and Lys72 each bind substrate. Residues Arg67 to Lys72, Tyr82 to Thr83, Arg88, Lys89, and Gln111 contribute to the FMN site. Substrate-binding residues include Tyr129, Arg133, and Ser137. FMN contacts are provided by residues Gln146–Ser147 and Trp191. Arg197–His199 is a binding site for substrate. Residue Arg201 participates in FMN binding.

Belongs to the pyridoxamine 5'-phosphate oxidase family. Homodimer. The cofactor is FMN.

The catalysed reaction is pyridoxamine 5'-phosphate + O2 + H2O = pyridoxal 5'-phosphate + H2O2 + NH4(+). It carries out the reaction pyridoxine 5'-phosphate + O2 = pyridoxal 5'-phosphate + H2O2. It functions in the pathway cofactor metabolism; pyridoxal 5'-phosphate salvage; pyridoxal 5'-phosphate from pyridoxamine 5'-phosphate: step 1/1. Its pathway is cofactor metabolism; pyridoxal 5'-phosphate salvage; pyridoxal 5'-phosphate from pyridoxine 5'-phosphate: step 1/1. Its function is as follows. Catalyzes the oxidation of either pyridoxine 5'-phosphate (PNP) or pyridoxamine 5'-phosphate (PMP) into pyridoxal 5'-phosphate (PLP). The protein is Pyridoxine/pyridoxamine 5'-phosphate oxidase of Escherichia fergusonii (strain ATCC 35469 / DSM 13698 / CCUG 18766 / IAM 14443 / JCM 21226 / LMG 7866 / NBRC 102419 / NCTC 12128 / CDC 0568-73).